The primary structure comprises 150 residues: Globin-3 (150 aa).

A Globin domain is found at 11-150 (PLTAADKTKI…IICILLNSAY (140 aa)). His-74 and His-106 together coordinate heme b.

The protein belongs to the globin family. Monomer.

The sequence is that of Globin-3 from Mordacia mordax (Southern hemisphere lamprey).